The chain runs to 185 residues: Ribosome-recycling factor (185 aa).

Belongs to the RRF family.

The protein localises to the cytoplasm. Functionally, responsible for the release of ribosomes from messenger RNA at the termination of protein biosynthesis. May increase the efficiency of translation by recycling ribosomes from one round of translation to another. The protein is Ribosome-recycling factor of Ehrlichia chaffeensis (strain ATCC CRL-10679 / Arkansas).